Reading from the N-terminus, the 424-residue chain is Kynurenine--oxoglutarate transaminase 1 (424 aa).

Gly36 contributes to the substrate binding site. An N6-succinyllysine modification is found at Lys82. Asn185 lines the substrate pocket. Lys247 carries the N6-(pyridoxal phosphate)lysine modification. Arg398 is a substrate binding site. Lys413 carries the N6-succinyllysine modification.

The protein belongs to the class-I pyridoxal-phosphate-dependent aminotransferase family. As to quaternary structure, homodimer. Pyridoxal 5'-phosphate is required as a cofactor.

The protein localises to the cytoplasm. It localises to the cytosol. It carries out the reaction L-kynurenine + 2-oxoglutarate = kynurenate + L-glutamate + H2O. The catalysed reaction is 3-phenylpyruvate + L-glutamine = 2-oxoglutaramate + L-phenylalanine. It catalyses the reaction an S-substituted L-cysteine + H2O = a thiol + pyruvate + NH4(+). The protein operates within amino-acid degradation; L-kynurenine degradation; kynurenate from L-kynurenine: step 1/2. In terms of biological role, catalyzes the irreversible transamination of the L-tryptophan metabolite L-kynurenine to form kynurenic acid (KA), an intermediate in the tryptophan catabolic pathway which is also a broad spectrum antagonist of the three ionotropic excitatory amino acid receptors among others. Metabolizes the cysteine conjugates of certain halogenated alkenes and alkanes to form reactive metabolites. Catalyzes the beta-elimination of S-conjugates and Se-conjugates of L-(seleno)cysteine, resulting in the cleavage of the C-S or C-Se bond. The polypeptide is Kynurenine--oxoglutarate transaminase 1 (Kyat1) (Mus musculus (Mouse)).